The chain runs to 309 residues: tRNA N6-adenosine threonylcarbamoyltransferase (309 aa).

Fe cation contacts are provided by H108 and H112. Substrate contacts are provided by residues 130-134 (LVSGG), D163, G176, D180, and N269. Residue D293 coordinates Fe cation.

Belongs to the KAE1 / TsaD family. Fe(2+) serves as cofactor.

It is found in the cytoplasm. It catalyses the reaction L-threonylcarbamoyladenylate + adenosine(37) in tRNA = N(6)-L-threonylcarbamoyladenosine(37) in tRNA + AMP + H(+). Its function is as follows. Required for the formation of a threonylcarbamoyl group on adenosine at position 37 (t(6)A37) in tRNAs that read codons beginning with adenine. Is involved in the transfer of the threonylcarbamoyl moiety of threonylcarbamoyl-AMP (TC-AMP) to the N6 group of A37, together with TsaE and TsaB. TsaD likely plays a direct catalytic role in this reaction. The protein is tRNA N6-adenosine threonylcarbamoyltransferase of Mycoplasmopsis agalactiae (strain NCTC 10123 / CIP 59.7 / PG2) (Mycoplasma agalactiae).